We begin with the raw amino-acid sequence, 439 residues long: Serine/threonine-protein kinase 2 (439 aa).

Residues 87 to 439 enclose the Protein kinase domain; the sequence is NDDFYHISTG…IFSDWINGGN (353 aa). ATP-binding positions include 93–101 and Lys117; that span reads ISTGGYGIV. Asp307 serves as the catalytic Proton acceptor.

This sequence belongs to the protein kinase superfamily. Ser/Thr protein kinase family. In terms of processing, phosphorylated in vivo. Autophosphorylated in vitro.

It localises to the host endoplasmic reticulum. The protein localises to the host endoplasmic reticulum-Golgi intermediate compartment. The catalysed reaction is L-seryl-[protein] + ATP = O-phospho-L-seryl-[protein] + ADP + H(+). The enzyme catalyses L-threonyl-[protein] + ATP = O-phospho-L-threonyl-[protein] + ADP + H(+). Functionally, essential serine-protein kinase involved in the early stage of virion morphogenesis. This Bos taurus (Bovine) protein is Serine/threonine-protein kinase 2 (OPG054).